The primary structure comprises 1318 residues: MVMQERNSNEDNKVNHGIDNIYVLELDLDGSVLFASTNFSQITGISSLELTGKPAALLSSDQEIFNAAIEQLLDDDSHSVKIHTVISKLPSLEENVFVQDEEMELQSKSVELDCVGVLIRDPLTSRPSHTLWVLQPLKPTRITRQEIGQQLTETLGFGAQLLAQHLEKLQTVPSTDSLPPFETVLCRVCDHEIQNWYFEHHTELCLLIHHAEARAQEANDLLNEQRNALQSLLDSLDDQIEPDVSYLGVPLAAVLPSSITSSAKSNSRSSLSQKIRNYISNMLFDAISYTDSCLAIHLPFIPESTTREDNQPFSEIRLLSPASEVFNAKTLSWCLPHIDDPGLQLMFENTDALVKKKLDAINRLSNIIYYSERVRCEIEDQVQTIIEQSIQVDGYDEPLSTTTPTLIEPIQETLMTQSPIIECEPFNTVKPSVSPEEVHDISQFNHRNDPPITAASVDSSNSFSVHRSSTNHSSTNSGSPNLSRRNNLAIPIASRRKSVSAVNTLYGVGSSYTSESFPFSKLTVPVERNSFRETESPKPFLSRQIGISTLSSNISSGKGTPSIQDYEIIKPISKGTFGTVYLSRKNTTGEIYAIKVLRKVDMISKNQVANVKAERAVLMAQEESAFVAKLYYAFQSRDYLYLVMEFMNGGDCASLLKSLYTIPESWAKIYIAEVALGLEHLHRLGIIHRDIKPDNILMSITGHLKLADFGLSQLGLTTRQLRLQKGKNNILSPPSFQSPTALGDPGDNIASSPLILPTSVSAFSYDEKSQKQKTELATFTTYKEDDTTTTTRTSIDSISSKYLESPVDSQKVNRTPNLQSVPFFRQPDAPKRFVGTPDYLAPETLRGSTQDDMVDWWALGCVLFEFLFGYPPFHAETPEKVFENILANNIAWPDLEMYPCSEEALDLINGFLQPNPERRLGFSDINEIKEHPFFNGINWDDIFSHEAPFIPAPETPLDTAYFDSRGAGAAESNMSSSVNSGEEVSKDNNVSQERGSQFLRSSHGRSRERSTSARRSRRFSEANSEFDEFGPFSYKNLSVLERANRNAIEKIRSEIAGKLHISPPDPHIGYTPGSDMPSAKLYDQQLTLSPSLMTNQGSNFSSTDSTPRKSINSSDVESRSKTDGPKSMHDLIKQLHMRKHSSHTNQSTGSSESDDLFNLDLPISNLETSYPFKIEEGQASPLSSPLSKTPPFFSSSVPLKALICVSKLNLFSELIKLLKSYKFQVSIVTDEDKMLRTLMADEKFSIIFLQLDLTRVSGVSILKIVRSSNCANRNTPAIALTPTRIDINAAIPRMFDGRLYLPINAFLLRGYIARLCNK.

Residues 431–485 form a disordered region; the sequence is PSVSPEEVHDISQFNHRNDPPITAASVDSSNSFSVHRSSTNHSSTNSGSPNLSRR. Residues 462–479 show a composition bias toward low complexity; the sequence is SFSVHRSSTNHSSTNSGS. The 369-residue stretch at 566–934 folds into the Protein kinase domain; that stretch reads YEIIKPISKG…INEIKEHPFF (369 aa). Residues 572-580 and lysine 595 each bind ATP; that span reads ISKGTFGTV. The active-site Proton acceptor is aspartate 690. In terms of domain architecture, AGC-kinase C-terminal spans 935–1044; sequence NGINWDDIFS…KNLSVLERAN (110 aa). Disordered regions lie at residues 968-1022, 1058-1078, and 1091-1127; these read GAAE…FSEA, KLHI…DMPS, and SLMT…GPKS. Residues 972–1000 are compositionally biased toward polar residues; it reads SNMSSSVNSGEEVSKDNNVSQERGSQFLR. A compositionally biased stretch (polar residues) spans 1091–1115; the sequence is SLMTNQGSNFSSTDSTPRKSINSSD. The span at 1116 to 1127 shows a compositional bias: basic and acidic residues; sequence VESRSKTDGPKS. One can recognise a Response regulatory domain in the interval 1200–1316; that stretch reads KALICVSKLN…LLRGYIARLC (117 aa).

The protein belongs to the protein kinase superfamily. Ser/Thr protein kinase family.

The protein localises to the cytoplasm. The catalysed reaction is L-seryl-[protein] + ATP = O-phospho-L-seryl-[protein] + ADP + H(+). It carries out the reaction L-threonyl-[protein] + ATP = O-phospho-L-threonyl-[protein] + ADP + H(+). The sequence is that of Serine/threonine-protein kinase ppk18 (ppk18) from Schizosaccharomyces pombe (strain 972 / ATCC 24843) (Fission yeast).